A 110-amino-acid polypeptide reads, in one-letter code: UPF0367 protein sync_2587 (110 aa).

Belongs to the UPF0367 family.

The protein is UPF0367 protein sync_2587 of Synechococcus sp. (strain CC9311).